The sequence spans 687 residues: Acetolactate synthase catalytic subunit, mitochondrial (687 aa).

Residues 1-90 (MIRQSTLKNF…AEPDMDTSFV (90 aa)) constitute a mitochondrion transit peptide. Residues 43–52 (YYSASPLPAS) show a composition bias toward low complexity. The segment at 43 to 68 (YYSASPLPASKRPEPAPSFNVDPLEQ) is disordered. Glu139 contributes to the thiamine diphosphate binding site. FAD is bound by residues Arg241, 355-376 (HGCA…VGAR), and 407-426 (EVSP…VEGD). The tract at residues 499–579 (QHQMWAAQHW…VKILILNNEE (81 aa)) is thiamine pyrophosphate binding. Mg(2+)-binding residues include Asp550, Asn577, and Glu579.

This sequence belongs to the TPP enzyme family. As to quaternary structure, homodimer. The acetolactate synthase complex contains the catalytic subunit ILV2 and the regulatory small subunit ILV6. The cofactor is Mg(2+). Requires thiamine diphosphate as cofactor.

Its subcellular location is the mitochondrion. The enzyme catalyses 2 pyruvate + H(+) = (2S)-2-acetolactate + CO2. It carries out the reaction 2-oxobutanoate + pyruvate + H(+) = (S)-2-ethyl-2-hydroxy-3-oxobutanoate + CO2. It participates in amino-acid biosynthesis; L-isoleucine biosynthesis; L-isoleucine from 2-oxobutanoate: step 1/4. It functions in the pathway amino-acid biosynthesis; L-valine biosynthesis; L-valine from pyruvate: step 1/4. The regulatory subunit ILV6 stimulates enzymatic activity seven- to tenfold and confers sensitivity to inhibition by valine and activation by ATP. Its function is as follows. Catalytic subunit of mitochondrial acetolactate synthase, which catalyzes the first of a series of common steps in the biosynthesis of the branched-chain amino acids. Catalyzes the irreversible decarboxylation of pyruvate to a bound hydroxyethyl group that then condenses with either a second pyruvate molecule to form 2-acetolactate (AL) or with 2-ketobutyrate to form 2-aceto-2-hydroxybutyrate (AHB). The first product is the precursor for valine and leucine biosynthesis, while the second leads to isoleucine. The protein is Acetolactate synthase catalytic subunit, mitochondrial (ILV2) of Saccharomyces cerevisiae (strain ATCC 204508 / S288c) (Baker's yeast).